The following is a 339-amino-acid chain: Uroporphyrinogen decarboxylase (339 aa).

Residues R23–R27, D72, Y147, T202, and H315 each bind substrate.

This sequence belongs to the uroporphyrinogen decarboxylase family. Homodimer.

It is found in the cytoplasm. The catalysed reaction is uroporphyrinogen III + 4 H(+) = coproporphyrinogen III + 4 CO2. The protein operates within porphyrin-containing compound metabolism; protoporphyrin-IX biosynthesis; coproporphyrinogen-III from 5-aminolevulinate: step 4/4. Its function is as follows. Catalyzes the decarboxylation of four acetate groups of uroporphyrinogen-III to yield coproporphyrinogen-III. This chain is Uroporphyrinogen decarboxylase, found in Geobacter sp. (strain M21).